A 467-amino-acid chain; its full sequence is UDP-N-acetylmuramate--L-alanine ligase (467 aa).

112–118 (GTHGKTT) provides a ligand contact to ATP.

This sequence belongs to the MurCDEF family.

It localises to the cytoplasm. The catalysed reaction is UDP-N-acetyl-alpha-D-muramate + L-alanine + ATP = UDP-N-acetyl-alpha-D-muramoyl-L-alanine + ADP + phosphate + H(+). It functions in the pathway cell wall biogenesis; peptidoglycan biosynthesis. Cell wall formation. The chain is UDP-N-acetylmuramate--L-alanine ligase from Azoarcus sp. (strain BH72).